Reading from the N-terminus, the 434-residue chain is Alpha-enolase (434 aa).

Residue S40 participates in Mg(2+) binding. 2 residues coordinate substrate: H158 and E167. The Proton donor role is filled by E210. 3 residues coordinate Mg(2+): D245, E293, and D318. 2 residues coordinate substrate: E293 and D318. K343 serves as the catalytic Proton acceptor. Residues 370–373 (SHRS) and K394 each bind substrate.

The protein belongs to the enolase family. In terms of assembly, homodimer. Requires Mg(2+) as cofactor.

It is found in the cytoplasm. The catalysed reaction is (2R)-2-phosphoglycerate = phosphoenolpyruvate + H2O. It functions in the pathway carbohydrate degradation; glycolysis; pyruvate from D-glyceraldehyde 3-phosphate: step 4/5. The sequence is that of Alpha-enolase (eno1) from Xenopus laevis (African clawed frog).